The primary structure comprises 933 residues: Isoleucine--tRNA ligase (933 aa).

Residues 57–67 carry the 'HIGH' region motif; sequence PYANGNIHVGH. Residue E554 participates in L-isoleucyl-5'-AMP binding. Residues 595-599 carry the 'KMSKS' region motif; that stretch reads KMSKS. An ATP-binding site is contributed by K598.

The protein belongs to the class-I aminoacyl-tRNA synthetase family. IleS type 1 subfamily. In terms of assembly, monomer.

Its subcellular location is the cytoplasm. The catalysed reaction is tRNA(Ile) + L-isoleucine + ATP = L-isoleucyl-tRNA(Ile) + AMP + diphosphate. Its function is as follows. Catalyzes the attachment of isoleucine to tRNA(Ile). As IleRS can inadvertently accommodate and process structurally similar amino acids such as valine, to avoid such errors it has two additional distinct tRNA(Ile)-dependent editing activities. One activity is designated as 'pretransfer' editing and involves the hydrolysis of activated Val-AMP. The other activity is designated 'posttransfer' editing and involves deacylation of mischarged Val-tRNA(Ile). The protein is Isoleucine--tRNA ligase of Streptococcus pyogenes serotype M3 (strain ATCC BAA-595 / MGAS315).